Reading from the N-terminus, the 827-residue chain is Glycerol-3-phosphate acyltransferase (827 aa).

Positions 325–330 (CHRSHM) match the HXXXXD motif motif.

This sequence belongs to the GPAT/DAPAT family.

The protein localises to the cell inner membrane. The enzyme catalyses sn-glycerol 3-phosphate + an acyl-CoA = a 1-acyl-sn-glycero-3-phosphate + CoA. It functions in the pathway phospholipid metabolism; CDP-diacylglycerol biosynthesis; CDP-diacylglycerol from sn-glycerol 3-phosphate: step 1/3. This is Glycerol-3-phosphate acyltransferase from Escherichia coli (strain SMS-3-5 / SECEC).